The primary structure comprises 565 residues: CTP synthase (565 aa).

Residues 1 to 272 (MARPKNVKHI…DLRVLKKLGL (272 aa)) form an amidoligase domain region. Ser18 is a binding site for CTP. Ser18 is a UTP binding site. An ATP-binding site is contributed by 19–24 (SLGKGI). Position 59 (Tyr59) interacts with L-glutamine. An ATP-binding site is contributed by Asp76. 2 residues coordinate Mg(2+): Asp76 and Glu146. CTP is bound by residues 153-155 (DIE), 193-198 (KTKPTQ), and Lys229. UTP-binding positions include 193 to 198 (KTKPTQ) and Lys229. In terms of domain architecture, Glutamine amidotransferase type-1 spans 299–543 (TIGICGKYTE…VAAAKEYAHG (245 aa)). Gly363 contacts L-glutamine. The Nucleophile; for glutamine hydrolysis role is filled by Cys390. Residues 391–394 (LGMQ), Glu414, and Arg471 contribute to the L-glutamine site. Catalysis depends on residues His516 and Glu518.

This sequence belongs to the CTP synthase family. As to quaternary structure, homotetramer.

The catalysed reaction is UTP + L-glutamine + ATP + H2O = CTP + L-glutamate + ADP + phosphate + 2 H(+). It carries out the reaction L-glutamine + H2O = L-glutamate + NH4(+). It catalyses the reaction UTP + NH4(+) + ATP = CTP + ADP + phosphate + 2 H(+). The protein operates within pyrimidine metabolism; CTP biosynthesis via de novo pathway; CTP from UDP: step 2/2. With respect to regulation, allosterically activated by GTP, when glutamine is the substrate; GTP has no effect on the reaction when ammonia is the substrate. The allosteric effector GTP functions by stabilizing the protein conformation that binds the tetrahedral intermediate(s) formed during glutamine hydrolysis. Inhibited by the product CTP, via allosteric rather than competitive inhibition. Functionally, catalyzes the ATP-dependent amination of UTP to CTP with either L-glutamine or ammonia as the source of nitrogen. Regulates intracellular CTP levels through interactions with the four ribonucleotide triphosphates. The protein is CTP synthase of Pelodictyon phaeoclathratiforme (strain DSM 5477 / BU-1).